The primary structure comprises 281 residues: Ras-related protein Rab-40C (281 aa).

GTP contacts are provided by serine 23, glycine 26, lysine 27, and serine 46. The tract at residues 41 to 49 (SPYAYSNGI) is switch-I. Mg(2+)-binding residues include serine 46 and aspartate 69. The GTP site is built by glycine 72, asparagine 126, and arginine 127. The segment at 72–88 (GQGRFCTIFRSYSRGAQ) is switch-II. Residues 175–228 (LMRHGMEKIWRPNRVFSLQDLCCRAIVSCTPVHLIDKLPLPVTIKSHLKSFSMA) enclose the SOCS box domain. Residues 245-281 (SGAGGGGSKGNSLKRSKSIRPPQSPPQNCSRSNCKIS) are disordered. Positions 270–281 (PQNCSRSNCKIS) are enriched in polar residues. Cysteine 273 carries S-palmitoyl cysteine lipidation. Cysteine 278 is lipidated: S-geranylgeranyl cysteine.

Belongs to the small GTPase superfamily. Rab family. As to quaternary structure, component of the cullin-5-RING E3 ubiquitin-protein ligase complex (ECS(RAB40C) complex) composed of CUL5, Elongin BC (ELOB and ELOC), RNF7/RBX2 and RAB40C. Interacts with protein phosphatase 6 (PP6) complex components ANKRD28, ANKRD52, PPP6C, PP6R1 and PP6R2; the interaction leads to ANKRD28 ubiquitination and decreased PP6 activity. Interacts with DAB2IP; DAB2IP acts as a GAP for RAB40C. The cofactor is Mg(2+).

It is found in the cell membrane. Its subcellular location is the cytoplasm. The protein resides in the cytosol. The protein localises to the golgi apparatus membrane. It catalyses the reaction GTP + H2O = GDP + phosphate + H(+). The protein operates within protein modification; protein ubiquitination. With respect to regulation, regulated by guanine nucleotide exchange factors (GEFs) which promote the exchange of bound GDP for free GTP. Regulated by GTPase activating proteins (GAPs) including DAB2IP, which increase the GTP hydrolysis activity. Inhibited by GDP dissociation inhibitors (GDIs). In terms of biological role, RAB40C small GTPase acts as substrate-recognition component of the ECS(RAB40C) E3 ubiquitin ligase complex which mediates the ubiquitination and subsequent proteasomal degradation of target proteins. The Rab40 subfamily belongs to the Rab family that are key regulators of intracellular membrane trafficking, from the formation of transport vesicles to their fusion with membranes. Rabs cycle between an inactive GDP-bound form and an active GTP-bound form that is able to recruit to membranes different sets of downstream effectors directly responsible for vesicle formation, movement, tethering and fusion. As part of the ECS(RAB40C) complex, mediates ANKRD28 ubiquitination and degradation, thereby inhibiting protein phosphatase 6 (PP6) complex activity and focal adhesion assembly during cell migration. Also negatively regulate lipid droplets accumulation in a GTP-dependent manner. In Homo sapiens (Human), this protein is Ras-related protein Rab-40C.